Here is a 502-residue protein sequence, read N- to C-terminus: Ubiquitin-associated protein 1 (502 aa).

The tract at residues 1-95 is interaction with ESCRT-I; it reads MASKKLGADF…AEAKVNSKSG (95 aa). Positions 17–63 constitute a UMA domain; it reads LDDVPFKTGDKFKTPAKVGLPIGFSLPDCLQVVREVQYDFSLEKKTI. Basic and acidic residues predominate over residues 86–100; it reads AEAKVNSKSGPEGDS. The interval 86-117 is disordered; that stretch reads AEAKVNSKSGPEGDSKMSFSKTHSTATMPPPI. Residues 102-112 show a composition bias toward polar residues; the sequence is MSFSKTHSTAT. Ser-146, Ser-205, and Ser-289 each carry phosphoserine. Positions 260–290 are interaction with PTPN23; sequence VSNIKSLSFPKLDSDDSNQKTAKLASTFHST. UBA domains lie at 389–430 and 451–498; these read SPSE…LFAH and QCSE…LMAR.

Component of an ESCRT-I complex (endosomal sorting complex required for transport I) which consists of TSG101, VPS28, VPS37A and UBAP1 in a 1:1:1:1 stoichiometry. Interacts with PTPN23. Interacts (via UBA domains) with ubiquitinated proteins. In terms of tissue distribution, ubiquitous. Highly expressed in heart, brain, placenta, lung, liver, skeletal muscle and pancreas.

It is found in the cytoplasm. Its subcellular location is the cytosol. The protein resides in the endosome. Component of the ESCRT-I complex, a regulator of vesicular trafficking process. Binds to ubiquitinated cargo proteins and is required for the sorting of endocytic ubiquitinated cargos into multivesicular bodies (MVBs). Plays a role in the proteasomal degradation of ubiquitinated cell-surface proteins, such as EGFR and BST2. The protein is Ubiquitin-associated protein 1 of Homo sapiens (Human).